The sequence spans 609 residues: Aspartate--tRNA(Asp/Asn) ligase (609 aa).

An L-aspartate-binding site is contributed by E177. The aspartate stretch occupies residues 201–204 (QLFK). An L-aspartate-binding site is contributed by R223. ATP is bound by residues 223–225 (RDE) and Q232. H461 is an L-aspartate binding site. An ATP-binding site is contributed by E499. R506 contributes to the L-aspartate binding site. An ATP-binding site is contributed by 551–554 (GVDR).

Belongs to the class-II aminoacyl-tRNA synthetase family. Type 1 subfamily. As to quaternary structure, homodimer.

The protein resides in the cytoplasm. It catalyses the reaction tRNA(Asx) + L-aspartate + ATP = L-aspartyl-tRNA(Asx) + AMP + diphosphate. In terms of biological role, aspartyl-tRNA synthetase with relaxed tRNA specificity since it is able to aspartylate not only its cognate tRNA(Asp) but also tRNA(Asn). Reaction proceeds in two steps: L-aspartate is first activated by ATP to form Asp-AMP and then transferred to the acceptor end of tRNA(Asp/Asn). The protein is Aspartate--tRNA(Asp/Asn) ligase of Synechococcus sp. (strain CC9605).